A 242-amino-acid polypeptide reads, in one-letter code: Triosephosphate isomerase (242 aa).

8–10 is a binding site for substrate; it reads NWK. The Electrophile role is filled by His-98. The Proton acceptor role is filled by Glu-167. Substrate contacts are provided by residues Gly-173, Ser-205, and 226–227; that span reads GG.

The protein belongs to the triosephosphate isomerase family. Homodimer.

The protein localises to the cytoplasm. It carries out the reaction D-glyceraldehyde 3-phosphate = dihydroxyacetone phosphate. It participates in carbohydrate biosynthesis; gluconeogenesis. It functions in the pathway carbohydrate degradation; glycolysis; D-glyceraldehyde 3-phosphate from glycerone phosphate: step 1/1. In terms of biological role, involved in the gluconeogenesis. Catalyzes stereospecifically the conversion of dihydroxyacetone phosphate (DHAP) to D-glyceraldehyde-3-phosphate (G3P). The protein is Triosephosphate isomerase of Mesomycoplasma hyopneumoniae (strain 232) (Mycoplasma hyopneumoniae).